Consider the following 166-residue polypeptide: Transcription antitermination protein NusB (166 aa).

The segment covering 1-18 (MISDESDRFNPRDPKPAD) has biased composition (basic and acidic residues). The segment at 1-30 (MISDESDRFNPRDPKPADAGKPSKSAKRRE) is disordered.

The protein belongs to the NusB family.

In terms of biological role, involved in transcription antitermination. Required for transcription of ribosomal RNA (rRNA) genes. Binds specifically to the boxA antiterminator sequence of the ribosomal RNA (rrn) operons. This is Transcription antitermination protein NusB from Pseudomonas entomophila (strain L48).